The following is a 173-amino-acid chain: Small ribosomal subunit protein uS9 (173 aa).

The span at 1–15 (MTDTPTENLENTEVT) shows a compositional bias: polar residues. 2 disordered regions span residues 1 to 26 (MTDT…EIAY) and 135 to 173 (EASR…YSKR). The segment covering 154–173 (KERKKAGLKKARKAPQYSKR) has biased composition (basic residues).

This sequence belongs to the universal ribosomal protein uS9 family.

The polypeptide is Small ribosomal subunit protein uS9 (Cutibacterium acnes (strain DSM 16379 / KPA171202) (Propionibacterium acnes)).